The primary structure comprises 129 residues: Small ribosomal subunit protein uS9 (129 aa).

It belongs to the universal ribosomal protein uS9 family.

The chain is Small ribosomal subunit protein uS9 from Helicobacter pylori (strain HPAG1).